The chain runs to 304 residues: Glycine--tRNA ligase alpha subunit (304 aa).

Belongs to the class-II aminoacyl-tRNA synthetase family. As to quaternary structure, tetramer of two alpha and two beta subunits.

Its subcellular location is the cytoplasm. It catalyses the reaction tRNA(Gly) + glycine + ATP = glycyl-tRNA(Gly) + AMP + diphosphate. This chain is Glycine--tRNA ligase alpha subunit, found in Serratia proteamaculans (strain 568).